The following is a 379-amino-acid chain: Homoserine O-succinyltransferase (379 aa).

The region spanning 51-360 (NAVLICHALS…DAPQGHDAFL (310 aa)) is the AB hydrolase-1 domain. Catalysis depends on S157, which acts as the Nucleophile. R227 lines the substrate pocket. Residues D323 and H356 contribute to the active site. Residue D357 participates in substrate binding.

Belongs to the AB hydrolase superfamily. MetX family. In terms of assembly, homodimer.

The protein localises to the cytoplasm. It catalyses the reaction L-homoserine + succinyl-CoA = O-succinyl-L-homoserine + CoA. It functions in the pathway amino-acid biosynthesis; L-methionine biosynthesis via de novo pathway; O-succinyl-L-homoserine from L-homoserine: step 1/1. Requires MetW for activity. Its function is as follows. Transfers a succinyl group from succinyl-CoA to L-homoserine, forming succinyl-L-homoserine. The sequence is that of Homoserine O-succinyltransferase from Pseudomonas syringae pv. syringae (strain B728a).